A 30-amino-acid chain; its full sequence is Cyclotide cter-H (30 aa).

The segment at residues 1-30 is a cross-link (cyclopeptide (Gly-Asp)); that stretch reads GLPCGESCVFIPCITTVVGCSCKNKVCYND. Disulfide bonds link Cys4–Cys20, Cys8–Cys22, and Cys13–Cys27.

Contains 3 disulfide bonds. Post-translationally, this is a cyclic peptide.

Probably participates in a plant defense mechanism. The polypeptide is Cyclotide cter-H (Clitoria ternatea (Butterfly pea)).